The primary structure comprises 427 residues: Vitamin D3 receptor (427 aa).

Residues 21–96 constitute a DNA-binding region (nuclear receptor); sequence PRICGVCGDR…IGMMKEFILT (76 aa). Zn(2+) is bound by residues Cys24, Cys27, Cys41, Cys44, Cys60, Cys66, Cys76, and Cys79. NR C4-type zinc fingers lie at residues 24–44 and 60–79; these read CGVCGDRATGFHFNAMTCEGC and CPFNGDCRITKDNRRHCQAC. Positions 97-126 are hinge; it reads DEEVQRKREMILKRKEEEALKDSLRPKLSE. In terms of domain architecture, NR LBD spans 127 to 423; that stretch reads EQQRIIAILL…LTPLVLEVFG (297 aa). Tyr143 contacts calcitriol. Residues 149–201 are disordered; the sequence is DFGQFRPPVRGDEEEGTLPSRSSSAHAPSFSGSSSSSCSDQYTSSPDTMEPAS. The segment covering 168–193 has biased composition (low complexity); it reads SRSSSAHAPSFSGSSSSSCSDQYTSS. Residue Ser237 coordinates calcitriol. Positions 246–264 are interaction with coactivator LXXLL motif; it reads KMIPGFRDLTAEDQIVLLK. Residues Arg274, Ser278, His305, and His397 each contribute to the calcitriol site. Positions 416 to 424 match the 9aaTAD motif; the sequence is PLVLEVFGN.

It belongs to the nuclear hormone receptor family. NR1 subfamily. In terms of assembly, homodimer in the absence of bound vitamin D3. Heterodimer with RXRA after vitamin D3 binding. Interacts with MED1, NCOA1, NCOA2, NCOA3 and NCOA6 coactivators, leading to a strong increase of transcription of target genes. Interacts with the corepressor NCOR1. Interacts with SNW1. Interacts with IRX4, the interaction does not affect its transactivation activity. Interacts with CRY1. Interacts with CRY2 in a ligand-dependent manner. Post-translationally, ubiquitinated by UBR5, leading to its degradation: UBR5 specifically recognizes and binds ligand-bound VDR when it is not associated with coactivators (NCOAs). In presence of NCOAs, the UBR5-degron is not accessible, preventing its ubiquitination and degradation.

It localises to the nucleus. The protein localises to the cytoplasm. Its function is as follows. Nuclear receptor for calcitriol, the active form of vitamin D3 which mediates the action of this vitamin on cells. Enters the nucleus upon vitamin D3 binding where it forms heterodimers with the retinoid X receptor/RXR. The VDR-RXR heterodimers bind to specific response elements on DNA and activate the transcription of vitamin D3-responsive target genes. Plays a central role in calcium homeostasis. Also functions as a receptor for the secondary bile acid lithocholic acid (LCA) and its metabolites. The polypeptide is Vitamin D3 receptor (VDR) (Sus scrofa (Pig)).